A 544-amino-acid polypeptide reads, in one-letter code: Chaperonin GroEL 1 (544 aa).

Residues 29–32, 86–90, glycine 413, 479–481, and aspartate 495 contribute to the ATP site; these read TLGP, DGTTT, and NAA.

This sequence belongs to the chaperonin (HSP60) family. In terms of assembly, forms a cylinder of 14 subunits composed of two heptameric rings stacked back-to-back. Interacts with the co-chaperonin GroES.

It localises to the cytoplasm. The enzyme catalyses ATP + H2O + a folded polypeptide = ADP + phosphate + an unfolded polypeptide.. Together with its co-chaperonin GroES, plays an essential role in assisting protein folding. The GroEL-GroES system forms a nano-cage that allows encapsulation of the non-native substrate proteins and provides a physical environment optimized to promote and accelerate protein folding. The sequence is that of Chaperonin GroEL 1 from Trichormus variabilis (strain ATCC 29413 / PCC 7937) (Anabaena variabilis).